Here is a 389-residue protein sequence, read N- to C-terminus: Large envelope protein (389 aa).

Met1 is modified (N-acetylmethionine). A lipid anchor (N-myristoyl glycine; by host) is attached at Gly2. A pre-S1 region spans residues 2 to 108 (GTNLSVPNPL…PPLRDSHPQA (107 aa)). Residues 2 to 163 (GTNLSVPNPL…SSRTGDPALN (162 aa)) form a pre-S region. At 2 to 170 (GTNLSVPNPL…ALNMENITSG (169 aa)) the chain is on the virion surface; in external conformation side. At 2–242 (GTNLSVPNPL…PGYRWMCLRR (241 aa)) the chain is on the intravirion; in internal conformation side. Positions 79–103 (TVPPTASTNRQSGRQPTPISPPLRD) are disordered. Residues 84–95 (ASTNRQSGRQPT) show a composition bias toward polar residues. Residues 109-163 (MQWNSTALHQALQDPRVRGLYFPAGGSSSGTLNPVPNTASHISSISSRTGDPALN) are pre-S2. Residues 171–191 (FLGPLLVLQAGFFLLTRILTI) form a helical membrane-spanning segment. Over 192-242 (PQSLDSWWTSLNFLGGSPVCLGQNSQYPTSNHSPTSCPPICPGYRWMCLRR) the chain is Intravirion; in external conformation. The chain crosses the membrane as a helical span at residues 243-263 (FIIFLFILLLCLIFLLVLLDY). Over 264–337 (QGMLPVCPLI…WASVRFSWLS (74 aa)) the chain is Virion surface. Asn309 carries an N-linked (GlcNAc...) asparagine; by host glycan. The chain crosses the membrane as a helical span at residues 338–358 (LLVPFVQWFVGLSPTVWLSVI). At 359-364 (WMMWYW) the chain is on the intravirion side. A helical transmembrane segment spans residues 365–387 (GPSLYNIVSPFIPLLPIFFCLWV). The Virion surface segment spans residues 388–389 (YI).

This sequence belongs to the orthohepadnavirus major surface antigen family. In its internal form (Li-HBsAg), interacts with the capsid protein and with the isoform S. Interacts with host chaperone CANX. As to quaternary structure, associates with host chaperone CANX through its pre-S2 N glycan; this association may be essential for isoform M proper secretion. In terms of assembly, interacts with isoform L. Interacts with the antigens of satellite virus HDV (HDVAgs); this interaction is required for encapsidation of HDV genomic RNA. Post-translationally, isoform M is N-terminally acetylated by host at a ratio of 90%, and N-glycosylated by host at the pre-S2 region. Myristoylated.

Its subcellular location is the virion membrane. Its function is as follows. The large envelope protein exists in two topological conformations, one which is termed 'external' or Le-HBsAg and the other 'internal' or Li-HBsAg. In its external conformation the protein attaches the virus to cell receptors and thereby initiating infection. This interaction determines the species specificity and liver tropism. This attachment induces virion internalization predominantly through caveolin-mediated endocytosis. The large envelope protein also assures fusion between virion membrane and endosomal membrane. In its internal conformation the protein plays a role in virion morphogenesis and mediates the contact with the nucleocapsid like a matrix protein. The middle envelope protein plays an important role in the budding of the virion. It is involved in the induction of budding in a nucleocapsid independent way. In this process the majority of envelope proteins bud to form subviral lipoprotein particles of 22 nm of diameter that do not contain a nucleocapsid. This Hepatitis B virus genotype A1 subtype adw2 (isolate South Africa/84/2001) (HBV-A) protein is Large envelope protein.